Consider the following 247-residue polypeptide: Coiled-coil domain-containing protein 124 homolog (247 aa).

The segment at 1-146 (MGGKKFGTNS…TTTTGSDDHE (146 aa)) is disordered. Positions 8-85 (TNSKAEEARS…QEDKEIKERY (78 aa)) form a coiled coil. Over residues 11 to 114 (KAEEARSKKA…EQKQREKELA (104 aa)) the composition is skewed to basic and acidic residues. A compositionally biased stretch (low complexity) spans 122–140 (VVVVPTTTTTTTTTTTTTT).

The protein belongs to the CCDC124 family. Associates with translationally inactive ribosomes in the nonrotated state.

Ribosome-binding protein involved in ribosome hibernation: associates with translationally inactive ribosomes and stabilizes the nonrotated conformation of the 80S ribosome, thereby promoting ribosome preservation and storage. In Dictyostelium discoideum (Social amoeba), this protein is Coiled-coil domain-containing protein 124 homolog.